Consider the following 909-residue polypeptide: WD repeat-containing protein 20 homolog (909 aa).

The interval 58–132 is disordered; sequence SPAQGKLGSD…SAGNNTVEAR (75 aa). Composition is skewed to low complexity over residues 80 to 107 and 115 to 127; these read GANT…AISN and SHSN…AGNN. WD repeat units follow at residues 248–288, 321–362, 363–402, and 470–517; these read IDKT…AATA, TDNC…GIAR, SYFG…VVAR, and ADRN…LRHP. 5 disordered regions span residues 458–483, 554–628, 661–699, 720–739, and 749–775; these read FEGF…FRSD, SGQA…AGSV, SDSI…NSGS, SEKK…RQHR, and NQHN…GHSS. 2 stretches are compositionally biased toward polar residues: residues 555–569 and 595–606; these read GQAT…SCSP and TANCTISSQSSP. Low complexity-rich tracts occupy residues 612–628 and 673–699; these read EAAT…AGSV and GQRP…NSGS. One copy of the WD 5 repeat lies at 856 to 893; it reads IAHERLTALIFREDCFLTACQDGFIYTWARPGHATHAT.

In terms of assembly, component of the Usp12-46 deubiquitylase complex consisting of Usp12-46, Wdr20 and Uaf1; regulatory subunit that, together with Uaf1, stabilizes Usp12-46. The Usp12-46 deubiquitylase complex associates with arr/arrow; the interaction leads to deubiquitination and stabilization of arr/arrow.

Regulatory component of the Usp12-46 deubiquitylase complex. This complex deubiquitylates the wg/wingless-signaling receptor arr/arrow, which stabilizes the receptor and increases its concentration at the cell surface; this enhances the sensitivity of cells to wg/wingless-signal stimulation. This increases the amplitude and spatial range of the signaling response to the wg/wingless morphogen gradient, facilitating the precise concentration-dependent regulation of its target genes. Required for wg/wingless-mediated signaling in the wing imaginal disc and for wg/wingless-dependent regulation of intestinal stem cell proliferation. The polypeptide is WD repeat-containing protein 20 homolog (Drosophila melanogaster (Fruit fly)).